Reading from the N-terminus, the 59-residue chain is MDHRLLEIVACPVCKGKLTYDKDNQELICKLDRLAYPIKEGIPVLLEPEARTMSMDEGR.

It belongs to the UPF0434 family.

In Vibrio campbellii (strain ATCC BAA-1116), this protein is UPF0434 protein VIBHAR_01537.